We begin with the raw amino-acid sequence, 367 residues long: Quinolinate synthase (367 aa).

Residues histidine 45 and serine 62 each contribute to the iminosuccinate site. [4Fe-4S] cluster is bound at residue cysteine 109. Residues 140–142 (YVN) and serine 161 each bind iminosuccinate. Cysteine 229 is a [4Fe-4S] cluster binding site. Residues 255-257 (HPE) and threonine 272 each bind iminosuccinate. Cysteine 319 lines the [4Fe-4S] cluster pocket.

The protein belongs to the quinolinate synthase family. Type 3 subfamily. [4Fe-4S] cluster serves as cofactor.

Its subcellular location is the cytoplasm. It carries out the reaction iminosuccinate + dihydroxyacetone phosphate = quinolinate + phosphate + 2 H2O + H(+). It participates in cofactor biosynthesis; NAD(+) biosynthesis; quinolinate from iminoaspartate: step 1/1. Functionally, catalyzes the condensation of iminoaspartate with dihydroxyacetone phosphate to form quinolinate. The polypeptide is Quinolinate synthase (Anoxybacillus flavithermus (strain DSM 21510 / WK1)).